The sequence spans 419 residues: UDP-N-acetylglucosamine 1-carboxyvinyltransferase (419 aa).

22–23 (KN) is a binding site for phosphoenolpyruvate. Arginine 91 provides a ligand contact to UDP-N-acetyl-alpha-D-glucosamine. The active-site Proton donor is the cysteine 115. Cysteine 115 bears the 2-(S-cysteinyl)pyruvic acid O-phosphothioketal mark. UDP-N-acetyl-alpha-D-glucosamine contacts are provided by residues 120-124 (RPVDL), 160-163 (KVSV), aspartate 305, and isoleucine 327.

The protein belongs to the EPSP synthase family. MurA subfamily.

Its subcellular location is the cytoplasm. It catalyses the reaction phosphoenolpyruvate + UDP-N-acetyl-alpha-D-glucosamine = UDP-N-acetyl-3-O-(1-carboxyvinyl)-alpha-D-glucosamine + phosphate. It participates in cell wall biogenesis; peptidoglycan biosynthesis. With respect to regulation, in vitro inhibited by covalent binding of fosfomycin and the fungal product terreic acid in the presence of substrate UDP-N-acetylglucosamine, with an inactivation rate constant of 130 M(-1)sec(-1) for terreic acid. In terms of biological role, cell wall formation. Adds enolpyruvyl to UDP-N-acetylglucosamine. Target for the antibiotic fosfomycin. This is UDP-N-acetylglucosamine 1-carboxyvinyltransferase from Enterobacter cloacae subsp. cloacae (strain ATCC 13047 / DSM 30054 / NBRC 13535 / NCTC 10005 / WDCM 00083 / NCDC 279-56).